Here is a 908-residue protein sequence, read N- to C-terminus: 5'-3' exoribonuclease 2 homolog (908 aa).

Residues 263–280 form a CCHC-type zinc finger; the sequence is RPCDICNGFGHEMDKCVG. Disordered regions lie at residues 409–457 and 821–908; these read RQRR…VGNY and GGNQ…YRRF. Over residues 432-454 the composition is skewed to polar residues; that stretch reads HGSLNQSAFGASAVGPNSQQRSV. A Phosphoserine modification is found at serine 438. 2 stretches are compositionally biased toward low complexity: residues 825–868 and 878–908; these read GQSY…HNQR and QRNF…YRRF.

Belongs to the 5'-3' exonuclease family. XRN2/RAT1 subfamily. In terms of assembly, interacts with cuff and Rai1; the interaction with cuff may inhibit its role in RNA degradation.

The protein resides in the nucleus. Its function is as follows. A 5'-3' exoribonuclease. May promote the termination of transcription by RNA polymerase II and promote RNA degradation. Involved in turnover of piRNA precursors. The chain is 5'-3' exoribonuclease 2 homolog from Drosophila melanogaster (Fruit fly).